The following is a 572-amino-acid chain: Glypican-5 (572 aa).

Positions Met-1–Ser-24 are cleaved as a signal peptide. N-linked (GlcNAc...) asparagine glycosylation is found at Asn-120 and Asn-237. O-linked (Xyl...) (glycosaminoglycan) serine glycosylation occurs at Ser-486. Asn-493 carries an N-linked (GlcNAc...) asparagine glycan. Residues Ser-495, Ser-507, and Ser-509 are each glycosylated (O-linked (Xyl...) (glycosaminoglycan) serine). Asn-527 carries an N-linked (GlcNAc...) asparagine glycan.

Belongs to the glypican family.

The protein resides in the cell membrane. Its subcellular location is the secreted. It localises to the extracellular space. Cell surface proteoglycan that bears heparan sulfate. In Mus musculus (Mouse), this protein is Glypican-5 (Gpc5).